Consider the following 167-residue polypeptide: Putative NADH-quinone oxidoreductase subunit B 2 (167 aa).

Belongs to the complex I 20 kDa subunit family. In terms of assembly, NDH-1 is composed of 14 different subunits. Subunits NuoB, C, D, E, F, and G constitute the peripheral sector of the complex.

It is found in the cell inner membrane. The catalysed reaction is a quinone + NADH + 5 H(+)(in) = a quinol + NAD(+) + 4 H(+)(out). In terms of biological role, NDH-1 shuttles electrons from NADH, via FMN and iron-sulfur (Fe-S) centers, to quinones in the respiratory chain. Couples the redox reaction to proton translocation (for every two electrons transferred, four hydrogen ions are translocated across the cytoplasmic membrane), and thus conserves the redox energy in a proton gradient. This chain is Putative NADH-quinone oxidoreductase subunit B 2, found in Burkholderia pseudomallei (strain 1710b).